A 238-amino-acid chain; its full sequence is Ubiquinone/menaquinone biosynthesis C-methyltransferase UbiE (238 aa).

S-adenosyl-L-methionine-binding residues include Thr62 and Asp82.

The protein belongs to the class I-like SAM-binding methyltransferase superfamily. MenG/UbiE family.

The enzyme catalyses a 2-demethylmenaquinol + S-adenosyl-L-methionine = a menaquinol + S-adenosyl-L-homocysteine + H(+). The catalysed reaction is a 2-methoxy-6-(all-trans-polyprenyl)benzene-1,4-diol + S-adenosyl-L-methionine = a 5-methoxy-2-methyl-3-(all-trans-polyprenyl)benzene-1,4-diol + S-adenosyl-L-homocysteine + H(+). It functions in the pathway quinol/quinone metabolism; menaquinone biosynthesis; menaquinol from 1,4-dihydroxy-2-naphthoate: step 2/2. Its pathway is cofactor biosynthesis; ubiquinone biosynthesis. Functionally, methyltransferase required for the conversion of demethylmenaquinol (DMKH2) to menaquinol (MKH2) and the conversion of 2-polyprenyl-6-methoxy-1,4-benzoquinol (DDMQH2) to 2-polyprenyl-3-methyl-6-methoxy-1,4-benzoquinol (DMQH2). This Wolbachia pipientis wMel protein is Ubiquinone/menaquinone biosynthesis C-methyltransferase UbiE.